Reading from the N-terminus, the 283-residue chain is 32 kDa beta-galactoside-binding lectin (283 aa).

2 Galectin domains span residues 17 to 148 and 156 to 283; these read YRSL…VHWG and YESG…IQIQ. 217–223 contributes to the a beta-D-galactoside binding site; the sequence is WGNEERE.

(Microbial infection) Interacts (via domain galectin 2) with goat TMEM147. Interacts (via domain galectin 1) with goat TMEM63A.

It localises to the membrane. In terms of biological role, binds galactose. Exerts immunomodulatory effects on host peripheral blood mononuclear cells to down-regulate host immune response. Hemagglutinates human, dog, rabbit, chicken and mouse erythrocytes but does not hemagglutinate the erythrocytes of goat, its natural host. The polypeptide is 32 kDa beta-galactoside-binding lectin (GAL-1) (Haemonchus contortus (Barber pole worm)).